The primary structure comprises 438 residues: sn-glycerol-3-phosphate-binding periplasmic protein UgpB (438 aa).

A signal peptide spans 1-23; the sequence is MKPLHYTASALALGLALMGNAQA. Sn-glycerol 3-phosphate-binding residues include Tyr-65, Glu-89, Ser-144, Ser-270, Gly-307, Tyr-346, and Arg-397.

Belongs to the bacterial solute-binding protein 1 family. As to quaternary structure, the complex is composed of two ATP-binding proteins (UgpC), two transmembrane proteins (UgpA and UgpE) and a solute-binding protein (UgpB).

The protein resides in the periplasm. In terms of biological role, part of the ABC transporter complex UgpBAEC involved in sn-glycerol-3-phosphate (G3P) import. Binds G3P. In Escherichia coli O157:H7, this protein is sn-glycerol-3-phosphate-binding periplasmic protein UgpB (ugpB).